Consider the following 285-residue polypeptide: Integrin alpha-1 (285 aa).

Over 1–285 the chain is Extracellular; the sequence is ENMTFGTTLV…HYSQDWVMLG (285 aa). 4 N-linked (GlcNAc...) asparagine glycosylation sites follow: asparagine 2, asparagine 40, asparagine 208, and asparagine 232. Residues 66–279 enclose the VWFA domain; it reads IVLDGSNSIY…QAGFSAHYSQ (214 aa).

The protein belongs to the integrin alpha chain family. As to quaternary structure, heterodimer of an alpha and a beta subunit. Alpha-1 associates with beta-1.

The protein localises to the membrane. Its function is as follows. Integrin alpha-1/beta-1 is a receptor for laminin and collagen. It recognizes the proline-hydroxylated sequence G-F-P-G-E-R in collagen. Involved in anchorage-dependent, negative regulation of EGF-stimulated cell growth. In Gallus gallus (Chicken), this protein is Integrin alpha-1 (ITGA1).